The sequence spans 255 residues: Staphylococcal secretory antigen ssaA1 (255 aa).

The N-terminal stretch at 1–26 (MKKIVTATIATAGLATIAFAGHDAQA) is a signal peptide. Tandem repeats lie at residues 75–78 (YNNY), 88–91 (YNNY), and 98–101 (YNNY). The tract at residues 75-101 (YNNYNTYSYNNASYNNYYNHSYQYNNY) is 3 X 4 AA repeats of Y-N-N-Y. Residues 134–255 (AAPSSNGRSI…NQAGSYNFIH (122 aa)) form the Peptidase C51 domain.

The protein localises to the secreted. Its function is as follows. Not known; immunogenic protein. The polypeptide is Staphylococcal secretory antigen ssaA1 (ssaA1) (Staphylococcus aureus (strain MW2)).